We begin with the raw amino-acid sequence, 667 residues long: METLESELTCPICLELFEDPLLLPCAHSLCFNCAHRILVSHCATNEPVESINAFQCPTCRHVITLSQRGLDGLKRNVTLQNIIDRFQKASVSGPNSPSETRRERAFDANTMSSAEKVLCQFCDQDPAQDAVKTCVTCEVSYCDECLKATHPNKKPFTGHRLIEPIPDSHIRGLMCLEHEDEKVNMYCVTDDQLICALCKLVGRHRDHQVAALSERYDKLKQNLESNLTNLIKRNTELETLLAKLIQTCQHVEVNASRQEAKLTEECDLLIEIIQERRQIIGTKIKEGKVMRLRKLAQQIANCKQCIERSASLISQAEHSLKENDHARFLQTAKNITERVSMATASSQVLIPEINLNDTFDTFALDFSREKKLLECLDYLTAPNPPTIREELCTASYDTITVHWTSDDEFSVVSYELQYTIFTGQANVVSLCNSADSWMIVPNIKQNHYTVHGLQSGTKYIFMVKAINQAGSRSSEPGKLKTNSQPFKLDPKSAHRKLKVSHDNLTVERDESSSKKSHTPERFTSQGSYGVAGNVFIDSGRHYWEVVISGSTWYAIGLAYKSAPKHEWIGKNSASWALCRCNNNWVVRHNSKEIPIEPAPHPRRVGILLDYDNGSIAFYDALNSIHLYTFDVALAQPVCPTFTVWNKCLTIITGLPIPDHLDCTEQLP.

The segment at 10–60 (CPICLELFEDPLLLPCAHSLCFNCAHRILVSHCATNEPVESINAFQCPTCR) adopts an RING-type zinc-finger fold. Phosphoserine is present on residues Ser-92 and Ser-96. B box-type zinc fingers lie at residues 116–165 (KVLC…IEPI) and 172–212 (GLMC…VAAL). 12 residues coordinate Zn(2+): Cys-119, Cys-122, Cys-134, Cys-137, Cys-142, Cys-145, His-150, His-159, Cys-175, His-178, Cys-198, and His-204. Residues 205–264 (RDHQVAALSERYDKLKQNLESNLTNLIKRNTELETLLAKLIQTCQHVEVNASRQEAKLTE) are a coiled coil. A COS domain is found at 320 to 379 (LKENDHARFLQTAKNITERVSMATASSQVLIPEINLNDTFDTFALDFSREKKLLECLDYL). Positions 381–484 (APNPPTIREE…EPGKLKTNSQ (104 aa)) constitute a Fibronectin type-III domain. Residues 471–485 (SRSSEPGKLKTNSQP) show a composition bias toward polar residues. Residues 471–524 (SRSSEPGKLKTNSQPFKLDPKSAHRKLKVSHDNLTVERDESSSKKSHTPERFTS) are disordered. Residues 482–659 (NSQPFKLDPK…IITGLPIPDH (178 aa)) form the B30.2/SPRY domain. Positions 499–520 (VSHDNLTVERDESSSKKSHTPE) are enriched in basic and acidic residues. Phosphoserine is present on Ser-511.

Belongs to the TRIM/RBCC family. In terms of assembly, homodimer or heterodimer with MID2. Interacts with IGBP1.

Its subcellular location is the cytoplasm. It localises to the cytoskeleton. It carries out the reaction S-ubiquitinyl-[E2 ubiquitin-conjugating enzyme]-L-cysteine + [acceptor protein]-L-lysine = [E2 ubiquitin-conjugating enzyme]-L-cysteine + N(6)-ubiquitinyl-[acceptor protein]-L-lysine.. Its function is as follows. Has E3 ubiquitin ligase activity towards IGBP1, promoting its monoubiquitination, which results in deprotection of the catalytic subunit of protein phosphatase PP2A, and its subsequent degradation by polyubiquitination. The sequence is that of E3 ubiquitin-protein ligase Midline-1 (Mid1) from Rattus norvegicus (Rat).